Reading from the N-terminus, the 436-residue chain is GTPase Obg (436 aa).

Positions 2-160 constitute an Obg domain; the sequence is SMFLDTAKVS…RELALELKIL (159 aa). The OBG-type G domain maps to 161-338; it reads ADVGLVGFPS…LLDATAQLLA (178 aa). GTP contacts are provided by residues 167–174, 192–196, 214–217, 284–287, and 319–321; these read GFPSVGKS, FTTIV, DLPG, NKMD, and SGI. Residues Ser174 and Thr194 each contribute to the Mg(2+) site. One can recognise an OCT domain in the interval 358-436; that stretch reads GFEEEEKAFD…IGKFEFEFVD (79 aa).

It belongs to the TRAFAC class OBG-HflX-like GTPase superfamily. OBG GTPase family. As to quaternary structure, monomer. Mg(2+) serves as cofactor.

The protein localises to the cytoplasm. In terms of biological role, an essential GTPase which binds GTP, GDP and possibly (p)ppGpp with moderate affinity, with high nucleotide exchange rates and a fairly low GTP hydrolysis rate. Plays a role in control of the cell cycle, stress response, ribosome biogenesis and in those bacteria that undergo differentiation, in morphogenesis control. The protein is GTPase Obg of Streptococcus mutans serotype c (strain ATCC 700610 / UA159).